The chain runs to 634 residues: Kelch-like protein 31 (634 aa).

Residue A2 is modified to N,N,N-trimethylalanine. The region spanning 73–137 (CDLVIGTKTK…AYTGKLTLSL (65 aa)) is the BTB domain. A BACK domain is found at 172 to 273 (CMYVVNIAET…SAQDLVNYVQ (102 aa)). Kelch repeat units follow at residues 317-365 (VLVT…VMDG), 366-419 (FLYV…VFNG), 420-466 (LVYA…VADG), 468-513 (VLVT…TLSD), 515-565 (VYVM…ALHG), and 567-614 (AYLV…TLSM).

In terms of processing, N-terminus is methylated by METTL11A/NTM1. As to expression, strongly expressed in skeletal muscle and weakly in heart. According to PubMed:15302408, not expressed in other tissues. According to PubMed:18719355, abundantly expressed in both embryonic skeletal and heart tissues.

Transcriptional repressor in MAPK/JNK signaling pathway to regulate cellular functions. Overexpression inhibits the transcriptional activities of both the TPA-response element (TRE) and serum response element (SRE). This is Kelch-like protein 31 (KLHL31) from Homo sapiens (Human).